Here is a 1022-residue protein sequence, read N- to C-terminus: Dihydropyrimidine dehydrogenase [NADP(+)] (1022 aa).

Positions 26-45 are disordered; that stretch reads ANVHSTASKKNEKKHWKRNP. In terms of domain architecture, 4Fe-4S ferredoxin-type 1 spans 69-100; that stretch reads ERGALREALRCLKCADAPCQKSCPTNLDIKSF. Positions 79, 82, 87, and 91 each coordinate [4Fe-4S] cluster. Valine 129 provides a ligand contact to FAD. 4 residues coordinate [4Fe-4S] cluster: cysteine 130, cysteine 136, cysteine 140, and glutamine 156. Residues 194–198, 218–226, arginine 235, and leucine 261 each bind FAD; these read GCGPA and EKQKYIGGL. NADP(+)-binding positions include 340–343, 364–365, arginine 371, 437–439, and 481–487; these read AGDT, RK, AFG, and DIAGFAN. FAD is bound at residue 480-489; the sequence is GDIAGFANTT. Residues serine 550 and 574–575 contribute to the FMN site; that span reads KT. Residues asparagine 609 and 668-670 each bind substrate; that span reads NLS. The Proton acceptor role is filled by cysteine 671. Lysine 709 provides a ligand contact to FMN. 736–737 contacts substrate; it reads NT. Residues glycine 767, 793-795, and 816-817 each bind FMN; these read TGG and CS. 2 4Fe-4S ferredoxin-type domains span residues 943 to 975 and 976 to 1006; these read VQAL…FDPE and THLP…MVSR. The [4Fe-4S] cluster site is built by cysteine 952, cysteine 955, cysteine 958, cysteine 962, cysteine 985, cysteine 988, cysteine 991, and cysteine 995.

The protein belongs to the dihydropyrimidine dehydrogenase family. In terms of assembly, homodimer. The cofactor is FAD. It depends on FMN as a cofactor. [4Fe-4S] cluster serves as cofactor.

The protein resides in the cytoplasm. It carries out the reaction 5,6-dihydrouracil + NADP(+) = uracil + NADPH + H(+). It catalyses the reaction 5,6-dihydrothymine + NADP(+) = thymine + NADPH + H(+). The protein operates within amino-acid biosynthesis; beta-alanine biosynthesis. Functionally, involved in pyrimidine base degradation. Catalyzes the reduction of uracil and thymine. Also involved the degradation of the chemotherapeutic drug 5-fluorouracil. This is Dihydropyrimidine dehydrogenase [NADP(+)] (dpyd) from Danio rerio (Zebrafish).